Here is a 331-residue protein sequence, read N- to C-terminus: Glyceraldehyde-3-phosphate dehydrogenase, cytosolic (331 aa).

Residues 11 to 12 (RI), Asp33, and Arg77 each bind NAD(+). D-glyceraldehyde 3-phosphate-binding positions include 148 to 150 (SCT), Thr179, 208 to 209 (TG), and Arg231. Catalysis depends on Cys149, which acts as the Nucleophile. Asn313 provides a ligand contact to NAD(+).

It belongs to the glyceraldehyde-3-phosphate dehydrogenase family. Homotetramer.

It localises to the cytoplasm. It catalyses the reaction D-glyceraldehyde 3-phosphate + phosphate + NAD(+) = (2R)-3-phospho-glyceroyl phosphate + NADH + H(+). It participates in carbohydrate degradation; glycolysis; pyruvate from D-glyceraldehyde 3-phosphate: step 1/5. This is Glyceraldehyde-3-phosphate dehydrogenase, cytosolic (GAPC) from Leishmania mexicana.